The chain runs to 108 residues: UPF0060 membrane protein YnfA (108 aa).

Residues 1–5 (MIKTT) lie on the Periplasmic side of the membrane. Residues 6-26 (LLFFATALCEIIGCFLPWLWL) traverse the membrane as a helical segment. At 27–30 (KRNA) the chain is on the cytoplasmic side. The chain crosses the membrane as a helical span at residues 31–51 (SIWLLLPAGISLALFVWLLTL). The Periplasmic portion of the chain corresponds to 52-60 (HPAASGRVY). Residues 61–81 (AAYGGVYVCTALMWLRVVDGV) traverse the membrane as a helical segment. The Cytoplasmic portion of the chain corresponds to 82 to 84 (KLS). Residues 85-105 (LYDWTGALIALCGMLIIVAGW) traverse the membrane as a helical segment. Topologically, residues 106 to 108 (GRT) are periplasmic.

This sequence belongs to the UPF0060 family.

Its subcellular location is the cell inner membrane. The sequence is that of UPF0060 membrane protein YnfA from Shigella flexneri serotype 5b (strain 8401).